We begin with the raw amino-acid sequence, 211 residues long: Holliday junction branch migration complex subunit RuvA (211 aa).

A domain I region spans residues 1–70 (MIQFLQGQVV…QDQIALFGFG (70 aa)). The segment at 71–149 (RLAERDLFGQ…QWHKLQMGTG (79 aa)) is domain II. The flexible linker stretch occupies residues 150 to 158 (ETDSTLPTT). The interval 158–211 (TALLEDLEMTLLALGYTQTEIQQAIAMVSQVPDVAQSEDPEVWIRQAIGWLSDH) is domain III.

Belongs to the RuvA family. Homotetramer. Forms an RuvA(8)-RuvB(12)-Holliday junction (HJ) complex. HJ DNA is sandwiched between 2 RuvA tetramers; dsDNA enters through RuvA and exits via RuvB. An RuvB hexamer assembles on each DNA strand where it exits the tetramer. Each RuvB hexamer is contacted by two RuvA subunits (via domain III) on 2 adjacent RuvB subunits; this complex drives branch migration. In the full resolvosome a probable DNA-RuvA(4)-RuvB(12)-RuvC(2) complex forms which resolves the HJ.

The protein localises to the cytoplasm. The RuvA-RuvB-RuvC complex processes Holliday junction (HJ) DNA during genetic recombination and DNA repair, while the RuvA-RuvB complex plays an important role in the rescue of blocked DNA replication forks via replication fork reversal (RFR). RuvA specifically binds to HJ cruciform DNA, conferring on it an open structure. The RuvB hexamer acts as an ATP-dependent pump, pulling dsDNA into and through the RuvAB complex. HJ branch migration allows RuvC to scan DNA until it finds its consensus sequence, where it cleaves and resolves the cruciform DNA. This Synechocystis sp. (strain ATCC 27184 / PCC 6803 / Kazusa) protein is Holliday junction branch migration complex subunit RuvA.